The following is a 397-amino-acid chain: Anhydro-N-acetylmuramic acid kinase (397 aa).

An ATP-binding site is contributed by 21–28 (GTSLDGVD). The span at 373–384 (TPTNLPSVTGAS) shows a compositional bias: polar residues. The interval 373–397 (TPTNLPSVTGASARTPLGSLSVPGP) is disordered.

Belongs to the anhydro-N-acetylmuramic acid kinase family.

It catalyses the reaction 1,6-anhydro-N-acetyl-beta-muramate + ATP + H2O = N-acetyl-D-muramate 6-phosphate + ADP + H(+). It participates in amino-sugar metabolism; 1,6-anhydro-N-acetylmuramate degradation. The protein operates within cell wall biogenesis; peptidoglycan recycling. Catalyzes the specific phosphorylation of 1,6-anhydro-N-acetylmuramic acid (anhMurNAc) with the simultaneous cleavage of the 1,6-anhydro ring, generating MurNAc-6-P. Is required for the utilization of anhMurNAc either imported from the medium or derived from its own cell wall murein, and thus plays a role in cell wall recycling. The sequence is that of Anhydro-N-acetylmuramic acid kinase from Salinibacter ruber (strain DSM 13855 / M31).